The chain runs to 95 residues: Small ribosomal subunit protein bS21 (95 aa).

Residues 55 to 95 (RKLARKKMQREGLLPMKPKPVFGAGPGAGRGGPGAGARPPR) are disordered. Gly residues predominate over residues 78–89 (AGPGAGRGGPGA).

It belongs to the bacterial ribosomal protein bS21 family.

The chain is Small ribosomal subunit protein bS21 from Nitrobacter hamburgensis (strain DSM 10229 / NCIMB 13809 / X14).